The sequence spans 544 residues: Potential vesicular glutamate transporter vglu-3 (544 aa).

Topologically, residues 1 to 49 are cytoplasmic; sequence MPNGSIRNCANAVADTVRQTFSRKTWEHKEQLQTITEQKKFFLRKVRWQ. The chain crosses the membrane as a helical span at residues 50 to 70; sequence IAILAHFGFAISFGIRSNFGV. At 71 to 104 the chain is on the extracellular side; the sequence is AKNRMVNNFTDAYGEVHEREFLWTGAEVGMMESS. Residue Asn-78 is glycosylated (N-linked (GlcNAc...) asparagine). Residues 105–125 form a helical membrane-spanning segment; sequence FFYGYAASQIPAGVLAAKFAP. At 126-127 the chain is on the cytoplasmic side; that stretch reads NK. A helical membrane pass occupies residues 128–148; sequence IFMLGILVASFMNILSAISFN. The Extracellular portion of the chain corresponds to 149-154; sequence FHPYTD. Residues 155–175 traverse the membrane as a helical segment; that stretch reads IFVMVVQAVQGLALGVLYPAM. At 176–193 the chain is on the cytoplasmic side; sequence HGVWKFWAPPLERSKLAT. A helical transmembrane segment spans residues 194 to 214; it reads TAFTGSSVGVMTGLPASAYLV. Topologically, residues 215-219 are extracellular; the sequence is SHFSW. The chain crosses the membrane as a helical span at residues 220–240; that stretch reads STPFYVFGVVGIIWSLIWMYV. The Cytoplasmic segment spans residues 241-285; the sequence is SSHSPETHGYISDDEKKQVTEKIGDVAVKNMSLTTLPWRDMMTSS. The helical transmembrane segment at 286 to 306 threads the bilayer; the sequence is AVWAIIICTFCRSWGFFLLLG. The Extracellular portion of the chain corresponds to 307-323; sequence NQLTYMKDVLHIDIKNS. The chain crosses the membrane as a helical span at residues 324 to 344; that stretch reads GFISIFPQFGMCIVTLATGQL. At 345-360 the chain is on the cytoplasmic side; the sequence is CDYLRSSGKMSTEAVR. The helical transmembrane segment at 361-381 threads the bilayer; sequence KSVNTFGFTVEAMMLGCLAFV. Residues 382-384 are Extracellular-facing; the sequence is RDP. A helical membrane pass occupies residues 385 to 405; that stretch reads VIAVTCLVIACTGSGSVLSGF. Residues 406-416 are Cytoplasmic-facing; that stretch reads NVNHFDIAPRY. The helical transmembrane segment at 417 to 437 threads the bilayer; it reads APILMGIANGLGAVAGVGGMV. The Extracellular portion of the chain corresponds to 438–450; that stretch reads TNTVTYQNPDGWK. A helical membrane pass occupies residues 451-471; it reads WVFLLAMAIDIFGVIFFLIFA. Over 472-544 the chain is Cytoplasmic; sequence KGDVLPWARE…APAEKSESSS (73 aa). A disordered region spans residues 501–544; sequence SLSRKTRNREGDTSYEKMEEDSEMKPCSKKVEARAPAEKSESSS. Residues 508–544 are compositionally biased toward basic and acidic residues; sequence NREGDTSYEKMEEDSEMKPCSKKVEARAPAEKSESSS.

Belongs to the major facilitator superfamily. Sodium/anion cotransporter family. VGLUT subfamily.

The protein localises to the membrane. The chain is Potential vesicular glutamate transporter vglu-3 (vglu-3) from Caenorhabditis elegans.